The primary structure comprises 490 residues: Serine hydroxymethyltransferase (490 aa).

Residues Leu-179 and 183 to 185 (GHL) each bind (6S)-5,6,7,8-tetrahydrofolate. An N6-(pyridoxal phosphate)lysine modification is found at Lys-291. Residue Lys-362 forms an Isoglutamyl lysine isopeptide (Lys-Gln) (interchain with Q-Cter in protein Pup) linkage.

This sequence belongs to the SHMT family. As to quaternary structure, homodimer. It depends on pyridoxal 5'-phosphate as a cofactor.

Its subcellular location is the cytoplasm. It carries out the reaction (6R)-5,10-methylene-5,6,7,8-tetrahydrofolate + glycine + H2O = (6S)-5,6,7,8-tetrahydrofolate + L-serine. It participates in one-carbon metabolism; tetrahydrofolate interconversion. The protein operates within amino-acid biosynthesis; glycine biosynthesis; glycine from L-serine: step 1/1. In terms of biological role, catalyzes the reversible interconversion of serine and glycine with tetrahydrofolate (THF) serving as the one-carbon carrier. This reaction serves as the major source of one-carbon groups required for the biosynthesis of purines, thymidylate, methionine, and other important biomolecules. Also exhibits THF-independent aldolase activity toward beta-hydroxyamino acids, producing glycine and aldehydes, via a retro-aldol mechanism. The chain is Serine hydroxymethyltransferase from Mycolicibacterium smegmatis (strain ATCC 700084 / mc(2)155) (Mycobacterium smegmatis).